The chain runs to 381 residues: 4-hydroxyphenylpyruvate dioxygenase (381 aa).

VOC domains lie at 22-156 and 184-338; these read GMDA…LVER and AVDH…IFTK. Fe cation contacts are provided by H187, H270, and E349.

It belongs to the 4HPPD family. Homodimer. Fe cation is required as a cofactor.

It catalyses the reaction 3-(4-hydroxyphenyl)pyruvate + O2 = homogentisate + CO2. Its pathway is amino-acid degradation; L-phenylalanine degradation; acetoacetate and fumarate from L-phenylalanine: step 3/6. The chain is 4-hydroxyphenylpyruvate dioxygenase (hpd) from Streptomyces coelicolor (strain ATCC BAA-471 / A3(2) / M145).